The sequence spans 70 residues: Large ribosomal subunit protein bL31c (70 aa).

This sequence belongs to the bacterial ribosomal protein bL31 family. Type A subfamily. As to quaternary structure, part of the 50S ribosomal subunit.

Its subcellular location is the plastid. It is found in the chloroplast. In terms of biological role, binds the 23S rRNA. This is Large ribosomal subunit protein bL31c from Emiliania huxleyi (Coccolithophore).